Here is a 1129-residue protein sequence, read N- to C-terminus: Nuclear pore complex protein 15 (1129 aa).

Belongs to the nucleoporin Nup133 family.

The protein localises to the nucleus envelope. Its subcellular location is the nucleus. It is found in the nuclear pore complex. Important for early nematode development. The polypeptide is Nuclear pore complex protein 15 (Caenorhabditis elegans).